The primary structure comprises 424 residues: UPF0229 protein Sde_0732 (424 aa).

Residues 52 to 109 are disordered; sequence IGIPSKDISEPVFHHDSGGVDTRVLPGNDQFHSGDRIQRPPSGQGGGGSGKGASDSGE. Basic and acidic residues predominate over residues 58–69; sequence DISEPVFHHDSG.

Belongs to the UPF0229 family.

This is UPF0229 protein Sde_0732 from Saccharophagus degradans (strain 2-40 / ATCC 43961 / DSM 17024).